Here is a 108-residue protein sequence, read N- to C-terminus: Acid stress chaperone HdeB (108 aa).

The first 29 residues, 1 to 29 (MNISSLRKAFIFMGAVAALSLVNAQSALA), serve as a signal peptide directing secretion. An N6-acetyllysine modification is found at K93.

It belongs to the HdeB family.

The protein localises to the periplasm. Required for optimal acid stress protection, which is important for survival of enteric bacteria in the acidic environment of the host stomach. Exhibits a chaperone-like activity at acidic pH by preventing the aggregation of many different periplasmic proteins. The sequence is that of Acid stress chaperone HdeB from Escherichia coli O6:H1 (strain CFT073 / ATCC 700928 / UPEC).